We begin with the raw amino-acid sequence, 469 residues long: Cell division protein FtsP (469 aa).

The tat-type signal signal peptide spans 1 to 29; that stretch reads MPRLSRRQLLKTAAISTALSTVPAPLLAA. The region spanning 228-286 is the Plastocyanin-like domain; the sequence is IRLRLLNASLARAYDLRLDNDQEMLLIAQDLSFLPKAKSVKSLVLSPGERAEILVNMNE.

This sequence belongs to the FtsP family. Predicted to be exported by the Tat system. The position of the signal peptide cleavage has not been experimentally proven.

Its subcellular location is the periplasm. Its function is as follows. Cell division protein that is required for growth during stress conditions. May be involved in protecting or stabilizing the divisomal assembly under conditions of stress. This Haemophilus influenzae (strain 86-028NP) protein is Cell division protein FtsP.